The primary structure comprises 330 residues: Ketol-acid reductoisomerase (NADP(+)) (330 aa).

The KARI N-terminal Rossmann domain occupies 1-181 (MNVYYEQDAD…GGTKAGVIET (181 aa)). NADP(+) is bound by residues 24–27 (YGSQ), R47, S50, S52, and 82–85 (DQNQ). H107 is a catalytic residue. G133 contributes to the NADP(+) binding site. One can recognise a KARI C-terminal knotted domain in the interval 182 to 327 (SIKNETETDL…AKLRDMMSWL (146 aa)). Positions 190, 194, 226, and 230 each coordinate Mg(2+). S251 contacts substrate.

This sequence belongs to the ketol-acid reductoisomerase family. Mg(2+) is required as a cofactor.

It catalyses the reaction (2R)-2,3-dihydroxy-3-methylbutanoate + NADP(+) = (2S)-2-acetolactate + NADPH + H(+). The catalysed reaction is (2R,3R)-2,3-dihydroxy-3-methylpentanoate + NADP(+) = (S)-2-ethyl-2-hydroxy-3-oxobutanoate + NADPH + H(+). Its pathway is amino-acid biosynthesis; L-isoleucine biosynthesis; L-isoleucine from 2-oxobutanoate: step 2/4. It functions in the pathway amino-acid biosynthesis; L-valine biosynthesis; L-valine from pyruvate: step 2/4. In terms of biological role, involved in the biosynthesis of branched-chain amino acids (BCAA). Catalyzes an alkyl-migration followed by a ketol-acid reduction of (S)-2-acetolactate (S2AL) to yield (R)-2,3-dihydroxy-isovalerate. In the isomerase reaction, S2AL is rearranged via a Mg-dependent methyl migration to produce 3-hydroxy-3-methyl-2-ketobutyrate (HMKB). In the reductase reaction, this 2-ketoacid undergoes a metal-dependent reduction by NADPH to yield (R)-2,3-dihydroxy-isovalerate. The chain is Ketol-acid reductoisomerase (NADP(+)) from Pelodictyon phaeoclathratiforme (strain DSM 5477 / BU-1).